We begin with the raw amino-acid sequence, 160 residues long: Transcription elongation factor GreA (160 aa).

Residues 4–70 adopt a coiled-coil conformation; that stretch reads QKQYPMTQEG…IEQDIQRIEH (67 aa).

The protein belongs to the GreA/GreB family.

Necessary for efficient RNA polymerase transcription elongation past template-encoded arresting sites. The arresting sites in DNA have the property of trapping a certain fraction of elongating RNA polymerases that pass through, resulting in locked ternary complexes. Cleavage of the nascent transcript by cleavage factors such as GreA or GreB allows the resumption of elongation from the new 3'terminus. GreA releases sequences of 2 to 3 nucleotides. The polypeptide is Transcription elongation factor GreA (Staphylococcus carnosus (strain TM300)).